The sequence spans 186 residues: ATP synthase subunit delta (186 aa).

This sequence belongs to the ATPase delta chain family. In terms of assembly, F-type ATPases have 2 components, F(1) - the catalytic core - and F(0) - the membrane proton channel. F(1) has five subunits: alpha(3), beta(3), gamma(1), delta(1), epsilon(1). F(0) has three main subunits: a(1), b(2) and c(10-14). The alpha and beta chains form an alternating ring which encloses part of the gamma chain. F(1) is attached to F(0) by a central stalk formed by the gamma and epsilon chains, while a peripheral stalk is formed by the delta and b chains.

It localises to the cell membrane. Its function is as follows. F(1)F(0) ATP synthase produces ATP from ADP in the presence of a proton or sodium gradient. F-type ATPases consist of two structural domains, F(1) containing the extramembraneous catalytic core and F(0) containing the membrane proton channel, linked together by a central stalk and a peripheral stalk. During catalysis, ATP synthesis in the catalytic domain of F(1) is coupled via a rotary mechanism of the central stalk subunits to proton translocation. This protein is part of the stalk that links CF(0) to CF(1). It either transmits conformational changes from CF(0) to CF(1) or is implicated in proton conduction. This chain is ATP synthase subunit delta, found in Wolbachia pipientis wMel.